Consider the following 708-residue polypeptide: Polyribonucleotide nucleotidyltransferase (708 aa).

Mg(2+)-binding residues include Asp485 and Asp491. Residues 552-611 (PKTYIMSIPPDKIRDVIGSGGKVINKIIAETGVKIDIKEDGKIFVMSEDSEGAKKALKII) enclose the KH domain. An S1 motif domain is found at 621–689 (GEIYLGKVTK…NQGRINLSRK (69 aa)). Residues 689 to 708 (KDAIKDSEKKEQNEKDVQKK) form a disordered region.

Belongs to the polyribonucleotide nucleotidyltransferase family. Mg(2+) is required as a cofactor.

It localises to the cytoplasm. It carries out the reaction RNA(n+1) + phosphate = RNA(n) + a ribonucleoside 5'-diphosphate. Its function is as follows. Involved in mRNA degradation. Catalyzes the phosphorolysis of single-stranded polyribonucleotides processively in the 3'- to 5'-direction. The chain is Polyribonucleotide nucleotidyltransferase from Clostridium kluyveri (strain NBRC 12016).